The primary structure comprises 343 residues: GTPase Obg (343 aa).

The Obg domain maps to 1 to 158; it reads MFIDEAKIRV…FTLRLELKVL (158 aa). Residues 121–140 form a disordered region; it reads RGGRGNQHFATSTHQAPREH. An OBG-type G domain is found at 159-333; sequence ADIGIVGYPN…LKYAMAERVR (175 aa). GTP contacts are provided by residues 165–172, 190–194, 215–218, 286–289, and 314–316; these read GYPNVGKS, FTTLE, DIPG, SKID, and SAV. 2 residues coordinate Mg(2+): S172 and T192.

This sequence belongs to the TRAFAC class OBG-HflX-like GTPase superfamily. OBG GTPase family. As to quaternary structure, monomer. The cofactor is Mg(2+).

The protein localises to the cytoplasm. Its function is as follows. An essential GTPase which binds GTP, GDP and possibly (p)ppGpp with moderate affinity, with high nucleotide exchange rates and a fairly low GTP hydrolysis rate. Plays a role in control of the cell cycle, stress response, ribosome biogenesis and in those bacteria that undergo differentiation, in morphogenesis control. This chain is GTPase Obg, found in Acidobacterium capsulatum (strain ATCC 51196 / DSM 11244 / BCRC 80197 / JCM 7670 / NBRC 15755 / NCIMB 13165 / 161).